The primary structure comprises 560 residues: Muellerian-inhibiting factor (560 aa).

The signal sequence occupies residues 1 to 24 (MRDLPLTSLALVLSALGALLGTEA). Positions 25–451 (LRAEEPAVGT…DPRGPGRAQR (427 aa)) are excised as a propeptide. N-linked (GlcNAc...) asparagine glycosylation is present at asparagine 64. Residues 259-287 (PLPAHGQLDTVPFPPPRPSAELEESPPSA) form a disordered region. N-linked (GlcNAc...) asparagine glycosylation is present at asparagine 329. 3 disulfides stabilise this stretch: cysteine 462-cysteine 526, cysteine 488-cysteine 557, and cysteine 492-cysteine 559.

It belongs to the TGF-beta family. As to quaternary structure, homodimer; disulfide-linked. Post-translationally, preproprotein is proteolytically processed to generate N- and C-terminal cleavage products that homodimerize and associate to form a biologically active non-covalent complex. Binding of the non-covalent complex to AMHR2 induces dissociation of the pro-region from the mature C-terminal dimer. The N-terminal portion of the protein, despite having no intrinsic activity, has the role of amplifying the activity of the C-terminus. As to expression, in ovaries, AMH is detected in granulosa cells of early growing follicles.

The protein resides in the secreted. Plays an important role in several reproductive functions. Induces Muellerian duct regression during male fetal sexual differentiation. Also plays a role in Leydig cell differentiation and function. In female acts as a negative regulator of the primordial to primary follicle transition and decreases FSH sensitivity of growing follicles. AMH signals by binding to a specific type-II receptor, AMHR2, that heterodimerizes with type-I receptors (ACVR1 and BMPR1A), and recruiting SMAD proteins that are translocated to the nucleus to regulate target gene expression. In Homo sapiens (Human), this protein is Muellerian-inhibiting factor.